Consider the following 547-residue polypeptide: Chaperonin GroEL (547 aa).

ATP contacts are provided by residues 30–33 (TLGP), Lys-51, 87–91 (DGTTT), Gly-415, 479–481 (NAA), and Asp-495.

It belongs to the chaperonin (HSP60) family. As to quaternary structure, forms a cylinder of 14 subunits composed of two heptameric rings stacked back-to-back. Interacts with the co-chaperonin GroES.

The protein localises to the cytoplasm. It catalyses the reaction ATP + H2O + a folded polypeptide = ADP + phosphate + an unfolded polypeptide.. Functionally, together with its co-chaperonin GroES, plays an essential role in assisting protein folding. The GroEL-GroES system forms a nano-cage that allows encapsulation of the non-native substrate proteins and provides a physical environment optimized to promote and accelerate protein folding. This chain is Chaperonin GroEL, found in Cupriavidus metallidurans (strain ATCC 43123 / DSM 2839 / NBRC 102507 / CH34) (Ralstonia metallidurans).